Consider the following 518-residue polypeptide: Glutamate--cysteine ligase (518 aa).

It belongs to the glutamate--cysteine ligase type 1 family. Type 1 subfamily.

The catalysed reaction is L-cysteine + L-glutamate + ATP = gamma-L-glutamyl-L-cysteine + ADP + phosphate + H(+). It functions in the pathway sulfur metabolism; glutathione biosynthesis; glutathione from L-cysteine and L-glutamate: step 1/2. This is Glutamate--cysteine ligase from Klebsiella pneumoniae (strain 342).